Reading from the N-terminus, the 292-residue chain is Glycine--tRNA ligase alpha subunit (292 aa).

The protein belongs to the class-II aminoacyl-tRNA synthetase family. As to quaternary structure, tetramer of two alpha and two beta subunits.

The protein resides in the cytoplasm. The enzyme catalyses tRNA(Gly) + glycine + ATP = glycyl-tRNA(Gly) + AMP + diphosphate. The polypeptide is Glycine--tRNA ligase alpha subunit (Geobacter sulfurreducens (strain ATCC 51573 / DSM 12127 / PCA)).